The following is a 100-amino-acid chain: NADH-quinone oxidoreductase subunit K (100 aa).

Helical transmembrane passes span 2 to 22, 28 to 48, and 64 to 84; these read IPLS…VAGF, IIVM…NLVA, and FVIT…ICLF.

Belongs to the complex I subunit 4L family. As to quaternary structure, NDH-1 is composed of 14 different subunits. Subunits NuoA, H, J, K, L, M, N constitute the membrane sector of the complex.

Its subcellular location is the cell inner membrane. It catalyses the reaction a quinone + NADH + 5 H(+)(in) = a quinol + NAD(+) + 4 H(+)(out). Functionally, NDH-1 shuttles electrons from NADH, via FMN and iron-sulfur (Fe-S) centers, to quinones in the respiratory chain. The immediate electron acceptor for the enzyme in this species is believed to be ubiquinone. Couples the redox reaction to proton translocation (for every two electrons transferred, four hydrogen ions are translocated across the cytoplasmic membrane), and thus conserves the redox energy in a proton gradient. This is NADH-quinone oxidoreductase subunit K from Desulfovibrio desulfuricans (strain ATCC 27774 / DSM 6949 / MB).